Here is a 186-residue protein sequence, read N- to C-terminus: Negative modulator of initiation of replication (186 aa).

Positions 93-94 are interaction with DNA; that stretch reads AV.

It belongs to the SeqA family. Homodimer. Polymerizes to form helical filaments.

Its subcellular location is the cytoplasm. Negative regulator of replication initiation, which contributes to regulation of DNA replication and ensures that replication initiation occurs exactly once per chromosome per cell cycle. Binds to pairs of hemimethylated GATC sequences in the oriC region, thus preventing assembly of replication proteins and re-initiation at newly replicated origins. Repression is relieved when the region becomes fully methylated. In Shewanella halifaxensis (strain HAW-EB4), this protein is Negative modulator of initiation of replication.